A 162-amino-acid polypeptide reads, in one-letter code: Troponin C, skeletal muscle (162 aa).

4 consecutive EF-hand domains span residues 17–52, 53–88, 93–128, and 129–162; these read EMIA…LGQN, PTKE…QMKE, KSEE…TGEH, and VTEE…EGVQ. Ca(2+)-binding residues include D30, D32, D36, E41, D66, D68, S70, T72, E77, D106, N108, D110, E117, D142, N144, D146, R148, and E153.

This sequence belongs to the troponin C family.

Troponin is the central regulatory protein of striated muscle contraction. Tn consists of three components: Tn-I which is the inhibitor of actomyosin ATPase, Tn-T which contains the binding site for tropomyosin and Tn-C. The binding of calcium to Tn-C abolishes the inhibitory action of Tn on actin filaments. The sequence is that of Troponin C, skeletal muscle (TNNC2) from Meleagris gallopavo (Wild turkey).